A 71-amino-acid polypeptide reads, in one-letter code: Protein MTH_1184 (71 aa).

In Methanothermobacter thermautotrophicus (strain ATCC 29096 / DSM 1053 / JCM 10044 / NBRC 100330 / Delta H) (Methanobacterium thermoautotrophicum), this protein is Protein MTH_1184.